The primary structure comprises 80 residues: MIKNEQPPLSFEEAMEQLEEVVEQLEQGDVPLEEAISMFQKGMNLSKVCHEKLATVEKQMDQILKEDGNFEETVLQEEQE.

It belongs to the XseB family. In terms of assembly, heterooligomer composed of large and small subunits.

Its subcellular location is the cytoplasm. It carries out the reaction Exonucleolytic cleavage in either 5'- to 3'- or 3'- to 5'-direction to yield nucleoside 5'-phosphates.. Its function is as follows. Bidirectionally degrades single-stranded DNA into large acid-insoluble oligonucleotides, which are then degraded further into small acid-soluble oligonucleotides. This is Exodeoxyribonuclease 7 small subunit from Halalkalibacterium halodurans (strain ATCC BAA-125 / DSM 18197 / FERM 7344 / JCM 9153 / C-125) (Bacillus halodurans).